The sequence spans 259 residues: Trypsin (259 aa).

Residues 1 to 32 (MKHFLRALKRCSVAVATVAIAVVGLQPVTASA) form the signal peptide. Residues 33 to 36 (APNP) constitute a propeptide, activation peptide. One can recognise a Peptidase S1 domain in the interval 37 to 257 (VVGGTRAAQG…FASAIASAAR (221 aa)). Residues Cys-58 and Cys-74 are joined by a disulfide bond. Residues His-73 and Asp-118 each act as charge relay system in the active site. Intrachain disulfides connect Cys-177–Cys-192 and Cys-204–Cys-233. Ser-208 serves as the catalytic Charge relay system.

Belongs to the peptidase S1 family.

It carries out the reaction Preferential cleavage: Arg-|-Xaa, Lys-|-Xaa.. The polypeptide is Trypsin (sprT) (Streptomyces griseus).